A 1755-amino-acid chain; its full sequence is Transposon Ty1-PL Gag-Pol polyprotein (1755 aa).

Polar residues-rich tracts occupy residues 1-23 (MESQ…SVTS), 48-60 (TKAN…TPAS), and 127-152 (QSQF…GNTF). Disordered stretches follow at residues 1–93 (MESQ…MMTQ), 126–174 (PQSQ…PPPM), and 352–421 (GSRN…SKST). Positions 153 to 165 (TDSSSADSDMTST) are enriched in low complexity. The RNA-binding stretch occupies residues 299 to 401 (NNGIHINNKV…NSKSKTARAH (103 aa)). Residues 402 to 418 (NVSTSNNSPSTDNDSIS) show a composition bias toward low complexity. At Ser-416 the chain carries Phosphoserine. Asp-461 (for protease activity; shared with dimeric partner) is an active-site residue. An integrase-type zinc finger-like region spans residues 583–640 (NVHTSESTRKYPYPFIHRMLAHANAQTIRYSLKNNTITYFNESDVDWSSAIDYQCPDC). Residues 660-835 (NSYEPFQYLH…AGLDISTLLP (176 aa)) form the Integrase catalytic domain. Mg(2+) contacts are provided by Asp-671 and Asp-736. 3 disordered regions span residues 956–1087 (SKAV…ETEK), 1092–1111 (RSPS…NIVP), and 1130–1187 (DLPL…DNET). The segment covering 960–969 (SPTDSTPPST) has biased composition (low complexity). Residues 1005 to 1015 (STPQISNIEST) are compositionally biased toward polar residues. Basic and acidic residues predominate over residues 1038-1053 (ESSHASKSKDFRHSDS). Composition is skewed to polar residues over residues 1054 to 1082 (YSEN…QISD) and 1101 to 1111 (PENNSSHNIVP). The short motif at 1178–1212 (KKRSLEDNETEIKVSRDTWNTKNMRSLEPPRSKKR) is the Bipartite nuclear localization signal element. A Reverse transcriptase Ty1/copia-type domain is found at 1338–1476 (NNYYITQLDI…DILGLEIKYQ (139 aa)). Mg(2+)-binding residues include Asp-1346, Asp-1427, Asp-1428, Asp-1610, Glu-1652, and Asp-1685. The RNase H Ty1/copia-type domain occupies 1610 to 1752 (DASYGNQPYY…IKTFKLLTNK (143 aa)).

In terms of assembly, the capsid protein forms a homotrimer, from which the VLPs are assembled. The protease is a homodimer, whose active site consists of two apposed aspartic acid residues. Post-translationally, initially, virus-like particles (VLPs) are composed of the structural unprocessed proteins Gag and Gag-Pol, and also contain the host initiator methionine tRNA (tRNA(i)-Met) which serves as a primer for minus-strand DNA synthesis, and a dimer of genomic Ty RNA. Processing of the polyproteins occurs within the particle and proceeds by an ordered pathway, called maturation. First, the protease (PR) is released by autocatalytic cleavage of the Gag-Pol polyprotein yielding capsid protein p45 and a Pol-p154 precursor protein. This cleavage is a prerequisite for subsequent processing of Pol-p154 at the remaining sites to release the mature structural and catalytic proteins. Maturation takes place prior to the RT reaction and is required to produce transposition-competent VLPs.

It is found in the cytoplasm. The protein resides in the nucleus. The catalysed reaction is DNA(n) + a 2'-deoxyribonucleoside 5'-triphosphate = DNA(n+1) + diphosphate. It catalyses the reaction Endonucleolytic cleavage to 5'-phosphomonoester.. Its function is as follows. Capsid protein (CA) is the structural component of the virus-like particle (VLP), forming the shell that encapsulates the retrotransposons dimeric RNA genome. The particles are assembled from trimer-clustered units and there are holes in the capsid shells that allow for the diffusion of macromolecules. CA also has nucleocapsid-like chaperone activity, promoting primer tRNA(i)-Met annealing to the multipartite primer-binding site (PBS), dimerization of Ty1 RNA and initiation of reverse transcription. Functionally, the aspartyl protease (PR) mediates the proteolytic cleavages of the Gag and Gag-Pol polyproteins after assembly of the VLP. Reverse transcriptase/ribonuclease H (RT) is a multifunctional enzyme that catalyzes the conversion of the retro-elements RNA genome into dsDNA within the VLP. The enzyme displays a DNA polymerase activity that can copy either DNA or RNA templates, and a ribonuclease H (RNase H) activity that cleaves the RNA strand of RNA-DNA heteroduplexes during plus-strand synthesis and hydrolyzes RNA primers. The conversion leads to a linear dsDNA copy of the retrotransposon that includes long terminal repeats (LTRs) at both ends. In terms of biological role, integrase (IN) targets the VLP to the nucleus, where a subparticle preintegration complex (PIC) containing at least integrase and the newly synthesized dsDNA copy of the retrotransposon must transit the nuclear membrane. Once in the nucleus, integrase performs the integration of the dsDNA into the host genome. This is Transposon Ty1-PL Gag-Pol polyprotein (TY1B-PL) from Saccharomyces cerevisiae (strain ATCC 204508 / S288c) (Baker's yeast).